The chain runs to 36 residues: Amanexitide proprotein 1 (36 aa).

The propeptide occupies 1–10; sequence MSDINTARLP. Positions 11-19 form a cross-link, cyclopeptide (Val-Pro); that stretch reads VFSLPVFFP. Residues 20 to 36 constitute a propeptide that is removed on maturation; sequence FVSDDIQAVLTRGESLC.

The protein belongs to the MSDIN fungal toxin family. Processed by the macrocyclase-peptidase enzyme POPB to yield a toxic cyclic nonapeptide. POPB first removes 10 residues from the N-terminus. Conformational trapping of the remaining peptide forces the enzyme to release this intermediate rather than proceed to macrocyclization. The enzyme rebinds the remaining peptide in a different conformation and catalyzes macrocyclization of the N-terminal 9 residues. As to expression, expressed in basidiocarps.

Functionally, cyclic nonapeptide that belongs to the MSDIN-like toxin family responsible for a large number of food poisoning cases and deaths. This chain is Amanexitide proprotein 1, found in Amanita exitialis (Guangzhou destroying angel).